Here is a 94-residue protein sequence, read N- to C-terminus: Small ribosomal subunit protein uS19 (94 aa).

Residues 75–94 (SHTRTFKGHAGDKKAAGSKR) are disordered. Residues 83-94 (HAGDKKAAGSKR) are compositionally biased toward basic and acidic residues.

The protein belongs to the universal ribosomal protein uS19 family.

In terms of biological role, protein S19 forms a complex with S13 that binds strongly to the 16S ribosomal RNA. This Nitrosomonas europaea (strain ATCC 19718 / CIP 103999 / KCTC 2705 / NBRC 14298) protein is Small ribosomal subunit protein uS19.